The following is a 110-amino-acid chain: U1-lycotoxin-Ls1mm (110 aa).

Residues 1-20 form the signal peptide; that stretch reads MKFVLLFGVLLVTLFSYSSA. A propeptide spanning residues 21–44 is cleaved from the precursor; sequence EMLDDFDQADEDELLSLIEKEEAR. Intrachain disulfides connect Cys47-Cys62, Cys54-Cys71, Cys61-Cys89, and Cys73-Cys87.

Belongs to the neurotoxin 19 (CSTX) family. 03 subfamily. Expressed by the venom gland.

The protein localises to the secreted. The polypeptide is U1-lycotoxin-Ls1mm (Lycosa singoriensis (Wolf spider)).